We begin with the raw amino-acid sequence, 314 residues long: Olfactory receptor 8U9 (314 aa).

Residues 1 to 25 (MAQINCTQVTEFILVGLTDREELKM) lie on the Extracellular side of the membrane. An N-linked (GlcNAc...) asparagine glycan is attached at asparagine 5. The chain crosses the membrane as a helical span at residues 26–46 (PLFVVFLSIYLFTTLGNLGLI). At 47–54 (LVIRTDAR) the chain is on the cytoplasmic side. The chain crosses the membrane as a helical span at residues 55–75 (LHTPMYFFLSNLAFVDFCYSS). Residues 76–99 (VITPKMLGNFLYKQNMISFNACAA) are Extracellular-facing. Cysteine 97 and cysteine 189 form a disulfide bridge. The helical transmembrane segment at 100 to 120 (QLGCFLAFMTAECLLLASMAY) threads the bilayer. The Cytoplasmic segment spans residues 121–133 (DRYVAICNPLLYM). Residues 134-154 (VLMSPGICFQLVAAPYSYSFL) traverse the membrane as a helical segment. Residues 155–196 (VALFHAILTFRLCYCHSNAINHFYCDDMPLLRLTCSDTHSKQ) lie on the Extracellular side of the membrane. The chain crosses the membrane as a helical span at residues 197–217 (LWIFVCAGIMFISSLLIVFIS). Over 218–237 (YTFIISAILRMRSAEGRRKA) the chain is Cytoplasmic. The helical transmembrane segment at 238-258 (FSTCGSHMLAVTIFYGTLIFM) threads the bilayer. Topologically, residues 259–271 (YLQPSSNHSLDTD) are extracellular. Residue asparagine 265 is glycosylated (N-linked (GlcNAc...) asparagine). The helical transmembrane segment at 272–292 (KMASVFYTVIIPMLNPLIYSL) threads the bilayer. The Cytoplasmic portion of the chain corresponds to 293 to 314 (RNKEVKDALKKLIASKNQMLSS).

Belongs to the G-protein coupled receptor 1 family.

The protein localises to the cell membrane. Its function is as follows. Potential odorant receptor. The polypeptide is Olfactory receptor 8U9 (Mus musculus (Mouse)).